The primary structure comprises 402 residues: MAKEKFSRNKPHVNIGTIGHVDHGKTTLTAAISAVLAVKYGGEMKDYDQIDNAPEERERGITIATSHIEYETAKRHYAHVDCPGHADYVKNMITGAAQMDGAILVIASTDGPMAQTREHILLSKQVGVPYIVVFMNKEDQLDPQDKEEMLELVEMEIRELLSTYDFPGDDTPIIAGSAFQALEEAKAGAVGPWGEKIVALMDAVDEYIPTPERDIDQAFLMPVEDVFSISGRGTVVTGRIEKGTIKVGEEIEIVGFGDTRKTTVTGVEMFRKEMDQGQAGDNCGILLRGIKKEDVERGQVLVKPGTITPHTKFRCEVYILSKEEGGRHTPFFSGYRPQFYVRTTDVTGSCTLPEGTEMVMPGDNVEMTVELVAPIALDKGTKFAIREGGRTVGAGVVAEIIA.

The tr-type G domain maps to 10–212 (KPHVNIGTIG…AVDEYIPTPE (203 aa)). The segment at 19-26 (GHVDHGKT) is G1. Residue 19 to 26 (GHVDHGKT) participates in GTP binding. Mg(2+) is bound at residue T26. A G2 region spans residues 60-64 (GITIA). Residues 81 to 84 (DCPG) are G3. GTP is bound by residues 81–85 (DCPGH) and 136–139 (NKED). The G4 stretch occupies residues 136 to 139 (NKED). Residues 177-179 (SAF) are G5.

The protein belongs to the TRAFAC class translation factor GTPase superfamily. Classic translation factor GTPase family. EF-Tu/EF-1A subfamily. As to quaternary structure, monomer.

It is found in the cytoplasm. The catalysed reaction is GTP + H2O = GDP + phosphate + H(+). Its function is as follows. GTP hydrolase that promotes the GTP-dependent binding of aminoacyl-tRNA to the A-site of ribosomes during protein biosynthesis. The protein is Elongation factor Tu of Aliarcobacter butzleri (strain RM4018) (Arcobacter butzleri).